Consider the following 80-residue polypeptide: D-alanyl carrier protein (80 aa).

The region spanning methionine 1 to glutamine 77 is the Carrier domain. The residue at position 35 (serine 35) is an O-(pantetheine 4'-phosphoryl)serine.

This sequence belongs to the DltC family. 4'-phosphopantetheine is transferred from CoA to a specific serine of apo-DCP.

It is found in the cytoplasm. It participates in cell wall biogenesis; lipoteichoic acid biosynthesis. Functionally, carrier protein involved in the D-alanylation of lipoteichoic acid (LTA). The loading of thioester-linked D-alanine onto DltC is catalyzed by D-alanine--D-alanyl carrier protein ligase DltA. The DltC-carried D-alanyl group is further transferred to cell membrane phosphatidylglycerol (PG) by forming an ester bond, probably catalyzed by DltD. D-alanylation of LTA plays an important role in modulating the properties of the cell wall in Gram-positive bacteria, influencing the net charge of the cell wall. The polypeptide is D-alanyl carrier protein (Lactobacillus delbrueckii subsp. bulgaricus (strain ATCC 11842 / DSM 20081 / BCRC 10696 / JCM 1002 / NBRC 13953 / NCIMB 11778 / NCTC 12712 / WDCM 00102 / Lb 14)).